The chain runs to 878 residues: Alanine--tRNA ligase (878 aa).

Residues His-568, His-572, Cys-670, and His-674 each coordinate Zn(2+).

Belongs to the class-II aminoacyl-tRNA synthetase family. It depends on Zn(2+) as a cofactor.

The protein resides in the cytoplasm. It carries out the reaction tRNA(Ala) + L-alanine + ATP = L-alanyl-tRNA(Ala) + AMP + diphosphate. In terms of biological role, catalyzes the attachment of alanine to tRNA(Ala) in a two-step reaction: alanine is first activated by ATP to form Ala-AMP and then transferred to the acceptor end of tRNA(Ala). Also edits incorrectly charged Ser-tRNA(Ala) and Gly-tRNA(Ala) via its editing domain. In Latilactobacillus sakei subsp. sakei (strain 23K) (Lactobacillus sakei subsp. sakei), this protein is Alanine--tRNA ligase.